Here is a 91-residue protein sequence, read N- to C-terminus: Large ribosomal subunit protein eL34 (91 aa).

Belongs to the eukaryotic ribosomal protein eL34 family.

This Thermofilum pendens (strain DSM 2475 / Hrk 5) protein is Large ribosomal subunit protein eL34.